A 596-amino-acid chain; its full sequence is Putative terpene synthase 2, chloroplastic (596 aa).

A chloroplast-targeting transit peptide spans 1-46 (MATLSMQVSTLSKQVKNLNTFGMGSASKLPMVARRVSTTRLRPICS). Asp349 and Asp353 together coordinate Mn(2+). The DDXXD motif motif lies at 349–353 (DDVYD). Homodimerization regions lie at residues 355-361 (YGTLDEL) and 427-464 (EAKW…FTLP). Mn(2+) contacts are provided by Asp493 and Glu501.

The protein belongs to the terpene synthase family. As to quaternary structure, homodimer. Mn(2+) is required as a cofactor. It depends on Mg(2+) as a cofactor.

It localises to the plastid. The protein resides in the chloroplast. The protein operates within secondary metabolite biosynthesis; terpenoid biosynthesis. Putative monoterpene synthase inactive on geranyl diphosphate (GPP). The sequence is that of Putative terpene synthase 2, chloroplastic from Thymus vulgaris (Thyme).